We begin with the raw amino-acid sequence, 478 residues long: Glycogen synthase (478 aa).

K16 contributes to the ADP-alpha-D-glucose binding site.

The protein belongs to the glycosyltransferase 1 family. Bacterial/plant glycogen synthase subfamily.

It carries out the reaction [(1-&gt;4)-alpha-D-glucosyl](n) + ADP-alpha-D-glucose = [(1-&gt;4)-alpha-D-glucosyl](n+1) + ADP + H(+). The protein operates within glycan biosynthesis; glycogen biosynthesis. In terms of biological role, synthesizes alpha-1,4-glucan chains using ADP-glucose. The polypeptide is Glycogen synthase (Lachnoclostridium phytofermentans (strain ATCC 700394 / DSM 18823 / ISDg) (Clostridium phytofermentans)).